The following is a 447-amino-acid chain: MVQMKKCTTKEDVLEAVKERDVKFIRTQFTDTLGIIKSWAIPAEQLEEAFENGVMFDGSSIQGFTRIEESDMKLALDPSTFRILPWRPATGAVARILGDVYLPDGNPFKGDPRYVLKTAIKEAEKMGFSMNVGPELEFFLFKLDANGNPTTELTDQGGYFDFAPLDRAQDVRRDIDYALEHMGFQIEASHHEVAPSQHEIDFRFGDVLCTADNVVTFKYVVKSIAYHKGYYASFMPKPLFGVNGSGMHSNQSLFKDGKNVFYDPDTPTKLSQDAMYYIGGLLKHIREFTAVTNPVVNSYKRLVPGYEAPVYISWSAQNRSSLIRIPATRGNGTRIELRCPDPACNPYLAFALMLRAGLEGIKNKIDPGEPTNVNIFHLSDKEREERGIRSLPADLKEAIDEMKGSKFVKEALGEHVFSHYLCAKEMEWDEYKAVVHPWELSRYLSML.

Positions 20–105 constitute a GS beta-grasp domain; the sequence is RDVKFIRTQF…ILGDVYLPDG (86 aa). The region spanning 112 to 447 is the GS catalytic domain; that stretch reads PRYVLKTAIK…WELSRYLSML (336 aa). 2 residues coordinate Mg(2+): Glu-135 and Glu-137. Glu-187 lines the ATP pocket. Mg(2+)-binding residues include Glu-192 and Glu-199. L-glutamate is bound by residues 243 to 244 and Gly-244; that span reads NG. His-248 lines the Mg(2+) pocket. Ser-252 is a binding site for ATP. Positions 301, 307, and 319 each coordinate L-glutamate. Arg-319 and Arg-324 together coordinate ATP. Glu-336 serves as a coordination point for Mg(2+). Arg-338 provides a ligand contact to L-glutamate.

Belongs to the glutamine synthetase family. In terms of assembly, homohexamer. Interacts and forms stable complexes with the regulatory protein GlnK1. Mg(2+) is required as a cofactor.

Its subcellular location is the cytoplasm. It carries out the reaction L-glutamate + NH4(+) + ATP = L-glutamine + ADP + phosphate + H(+). Its activity is regulated as follows. Directly stimulated by the effector molecule 2-oxoglutarate. Inhibited by GlnK1. 2-oxoglutarate antagonizes the inhibitory effects of GlnK1, but does not prevent GlnK1/GlnA1 complex formation. Functionally, probably involved in nitrogen metabolism via ammonium assimilation. Catalyzes the ATP-dependent biosynthesis of glutamine from glutamate and ammonia. In Methanosarcina mazei (strain ATCC BAA-159 / DSM 3647 / Goe1 / Go1 / JCM 11833 / OCM 88) (Methanosarcina frisia), this protein is Glutamine synthetase.